We begin with the raw amino-acid sequence, 303 residues long: 4-sulfomuconolactone hydrolase (303 aa).

Belongs to the metallo-dependent hydrolases superfamily. Sulfomuconolactone hydrolase family. In terms of assembly, monomer. Zn(2+) serves as cofactor.

The catalysed reaction is 4-sulfomuconolactone + H2O = maleylacetate + sulfite + 2 H(+). Completely inhibited by ZnCl(2) and CuCl(2). In terms of biological role, involved in the degradation of 4-sulfocatechol which is a central intermediate in the degradation of substituted sulfonated benzenes. Catalyzes the hydrolytical desulfonation of 4-sulfomuconolactone to yield maleylacetate. The polypeptide is 4-sulfomuconolactone hydrolase (Hydrogenophaga intermedia).